Here is a 427-residue protein sequence, read N- to C-terminus: Adenylosuccinate synthetase (427 aa).

GTP is bound by residues 12-18 and 40-42; these read GDEGKGK and GHT. Aspartate 13 functions as the Proton acceptor in the catalytic mechanism. 2 residues coordinate Mg(2+): aspartate 13 and glycine 40. Residues 13–16, 38–41, threonine 127, arginine 141, glutamine 222, threonine 237, and arginine 301 each bind IMP; these read DEGK and NAGH. The active-site Proton donor is the histidine 41. Residue 297–303 coordinates substrate; it reads VVTKRPR. GTP is bound by residues arginine 303, 329-331, and 411-413; these read SLD and AVG.

This sequence belongs to the adenylosuccinate synthetase family. In terms of assembly, homodimer. Mg(2+) is required as a cofactor.

It localises to the cytoplasm. The catalysed reaction is IMP + L-aspartate + GTP = N(6)-(1,2-dicarboxyethyl)-AMP + GDP + phosphate + 2 H(+). It participates in purine metabolism; AMP biosynthesis via de novo pathway; AMP from IMP: step 1/2. Plays an important role in the de novo pathway of purine nucleotide biosynthesis. Catalyzes the first committed step in the biosynthesis of AMP from IMP. The chain is Adenylosuccinate synthetase from Leuconostoc mesenteroides subsp. mesenteroides (strain ATCC 8293 / DSM 20343 / BCRC 11652 / CCM 1803 / JCM 6124 / NCDO 523 / NBRC 100496 / NCIMB 8023 / NCTC 12954 / NRRL B-1118 / 37Y).